A 541-amino-acid polypeptide reads, in one-letter code: Chaperonin GroEL (541 aa).

ATP is bound by residues 29-32, 86-90, Gly413, 477-479, and Asp493; these read TLGP, DGTTT, and DAL.

This sequence belongs to the chaperonin (HSP60) family. In terms of assembly, forms a cylinder of 14 subunits composed of two heptameric rings stacked back-to-back. Interacts with the co-chaperonin GroES.

The protein resides in the cytoplasm. It catalyses the reaction ATP + H2O + a folded polypeptide = ADP + phosphate + an unfolded polypeptide.. In terms of biological role, together with its co-chaperonin GroES, plays an essential role in assisting protein folding. The GroEL-GroES system forms a nano-cage that allows encapsulation of the non-native substrate proteins and provides a physical environment optimized to promote and accelerate protein folding. The sequence is that of Chaperonin GroEL from Clostridium botulinum (strain ATCC 19397 / Type A).